The following is a 429-amino-acid chain: High mobility group nucleosome-binding domain-containing protein 5 (429 aa).

The tract at residues 1 to 429 (MPKRKAAGDA…GEKGEPVSTV (429 aa)) is disordered. Thr29 is subject to Phosphothreonine. The segment covering 35–44 (KRASTSRKTK) has biased composition (basic residues). A Glycyl lysine isopeptide (Lys-Gly) (interchain with G-Cter in SUMO2) cross-link involves residue Lys64. Ser90 is modified (phosphoserine). Composition is skewed to basic and acidic residues over residues 92–101 (METEEVKEQI) and 109–124 (GGEK…KNDE). Residue Lys98 forms a Glycyl lysine isopeptide (Lys-Gly) (interchain with G-Cter in SUMO1); alternate linkage. Residue Lys98 forms a Glycyl lysine isopeptide (Lys-Gly) (interchain with G-Cter in SUMO2); alternate linkage. A Glycyl lysine isopeptide (Lys-Gly) (interchain with G-Cter in SUMO2) cross-link involves residue Lys121. The span at 133–152 (EKDEDEKEHEDTGEEGEDGE) shows a compositional bias: acidic residues. A compositionally biased stretch (basic and acidic residues) spans 153–195 (REGGLKEKPDVAEIEDAKEAKDDEEKEDKEKEDDKGGDGKKEE). The span at 196-209 (EKDDEGEAETEEEV) shows a compositional bias: acidic residues. 2 stretches are compositionally biased toward basic and acidic residues: residues 210–387 (KEQQ…NEDR) and 413–429 (NKDF…VSTV).

Belongs to the HMGN family. In terms of tissue distribution, expressed in trophoblast giant cells.

It localises to the nucleus. Functionally, preferentially binds to euchromatin and modulates cellular transcription by counteracting linker histone-mediated chromatin compaction. The protein is High mobility group nucleosome-binding domain-containing protein 5 of Rattus norvegicus (Rat).